Reading from the N-terminus, the 557-residue chain is MTNPRHNIRDVRAATGTELSAKSWMTEAPLRMLMNNLDPDVAERPHELVVYGGIGRAARTWEDFDRIVATLKTLTEEETLIVQSGKPVGVFKTHKDAPRVLIANSNLVPHWATWDHFNELDKKGLAMYGQMTAGSWIYIGTQGIVQGTYETFVEAGRQHYNGNLKGKWILTGGLGGMGGAQPLAAVMAGACCLAVECDETRVDFRLRTRYVDAKAHTLDEALALIDQWTKAGEAKSVGLIGNAADIFPELVKRGIRPDIVTDQTSAHDPINGYLPSGWTVAEWRAKQESDPKAVERAARASMKVHVAAMVDFWNMGVPTLDYGNNIRQVAKEEGLENAFAFPGFVPAYIRPLFCRGIGPFRWAALSGDPEDIYKTDAKVKELLPDNKHLHNWLDMARERIAFQGLPARICWVGLGDRHKLGLAFNEMVRSGELKAPVVIGRDHLDSGSVASPNRETEAMKDGSDAVSDWPLLNALLNCASGATWVSLHHGGGVGMGFSQHSGMVICADGTDDAARRLERVLWNDPATGVMRHADAGYDIALDCAKEKGLRLPGILGN.

NAD(+) contacts are provided by residues 52–53 (GG), glutamine 130, 176–178 (GMG), glutamate 196, arginine 201, 242–243 (NA), 263–267 (QTSAH), 273–274 (YL), and tyrosine 322. Residue cysteine 410 is part of the active site. Glycine 492 contributes to the NAD(+) binding site.

Belongs to the urocanase family. It depends on NAD(+) as a cofactor.

The protein localises to the cytoplasm. The catalysed reaction is 4-imidazolone-5-propanoate = trans-urocanate + H2O. It functions in the pathway amino-acid degradation; L-histidine degradation into L-glutamate; N-formimidoyl-L-glutamate from L-histidine: step 2/3. Catalyzes the conversion of urocanate to 4-imidazolone-5-propionate. The protein is Urocanate hydratase of Allorhizobium ampelinum (strain ATCC BAA-846 / DSM 112012 / S4) (Agrobacterium vitis (strain S4)).